We begin with the raw amino-acid sequence, 472 residues long: ATP synthase subunit beta (472 aa).

Residue 155 to 162 (GGAGVGKT) coordinates ATP.

The protein belongs to the ATPase alpha/beta chains family. As to quaternary structure, F-type ATPases have 2 components, CF(1) - the catalytic core - and CF(0) - the membrane proton channel. CF(1) has five subunits: alpha(3), beta(3), gamma(1), delta(1), epsilon(1). CF(0) has three main subunits: a(1), b(2) and c(9-12). The alpha and beta chains form an alternating ring which encloses part of the gamma chain. CF(1) is attached to CF(0) by a central stalk formed by the gamma and epsilon chains, while a peripheral stalk is formed by the delta and b chains.

It localises to the cell inner membrane. It catalyses the reaction ATP + H2O + 4 H(+)(in) = ADP + phosphate + 5 H(+)(out). Its function is as follows. Produces ATP from ADP in the presence of a proton gradient across the membrane. The catalytic sites are hosted primarily by the beta subunits. This Fervidobacterium nodosum (strain ATCC 35602 / DSM 5306 / Rt17-B1) protein is ATP synthase subunit beta.